The sequence spans 393 residues: Phospholipase A1-II 1 (393 aa).

A coiled-coil region spans residues 200–220 (QVLNEIKRLQDMYEHEETSIT). Ser225 acts as the Acyl-ester intermediate in catalysis. Active-site charge relay system residues include Ser225, Asp284, and His321.

This sequence belongs to the AB hydrolase superfamily. Lipase family.

Its subcellular location is the cytoplasm. Functionally, acylhydrolase that catalyzes the hydrolysis of phospholipids at the sn-1 position. This Oryza sativa subsp. indica (Rice) protein is Phospholipase A1-II 1.